We begin with the raw amino-acid sequence, 335 residues long: MTIVIGFEGSANKIGIGIIKDGEVLSNPRRTYITPPGQGFLPGETAKHHRSVILTVLQEALDEAGLKAADIDCVAYTKGPGMGAPLVTVAIVARTVAQLWGKPLLGVNHCIGHIEMGRLITNAQNPTVLYVSGGNTQVIAYSERRYRIFGETIDIAVGNCLDRFARVIKISNDPSPGYNIEQMAKKGNKYIELPYTVKGMDVSFSGILSYIEDAAHKMLSTDQCTPEDLCFSLQETVFAMLVEITERAMAHCGSQEVLIVGGVGCNLRLQEMMGVMCKERGARIFATDESFCIDNGAMIAQAGWEMFRSGHVTELPDSWITQRYRTDEVEVTWRD.

A divalent metal cation is bound by residues His-109, His-113, and Tyr-130. Substrate is bound by residues 130–134, Asp-162, Gly-177, Glu-181, and Asn-266; that span reads YVSGG. Asp-294 lines the a divalent metal cation pocket.

It belongs to the KAE1 / TsaD family. Component of the EKC/KEOPS complex composed of at least tp53rk, tprkb, osgep and lage3; the whole complex dimerizes. It depends on a divalent metal cation as a cofactor.

It localises to the cytoplasm. The protein localises to the nucleus. It catalyses the reaction L-threonylcarbamoyladenylate + adenosine(37) in tRNA = N(6)-L-threonylcarbamoyladenosine(37) in tRNA + AMP + H(+). Its function is as follows. Component of the EKC/KEOPS complex that is required for the formation of a threonylcarbamoyl group on adenosine at position 37 (t(6)A37) in tRNAs that read codons beginning with adenine. The complex is probably involved in the transfer of the threonylcarbamoyl moiety of threonylcarbamoyl-AMP (TC-AMP) to the N6 group of A37. OSGEP likely plays a direct catalytic role in this reaction, but requires other protein(s) of the complex to fulfill this activity. This chain is tRNA N6-adenosine threonylcarbamoyltransferase, found in Danio rerio (Zebrafish).